The following is a 530-amino-acid chain: Cytochrome P450 monooxygenase sttB (530 aa).

Asn5 is a glycosylation site (N-linked (GlcNAc...) asparagine). Residues 24-44 (LPILTVALLTGIASAVYINVS) traverse the membrane as a helical segment. Residue Asn230 is glycosylated (N-linked (GlcNAc...) asparagine).

This sequence belongs to the cytochrome P450 family. Heme is required as a cofactor.

Its subcellular location is the membrane. The enzyme catalyses preaspterpenacid acid I + reduced [NADPH--hemoprotein reductase] + O2 = preaspterpenacid acid II + oxidized [NADPH--hemoprotein reductase] + H2O + H(+). Its pathway is secondary metabolite biosynthesis; terpenoid biosynthesis. In terms of biological role, cytochrome P450 monooxygenase; part of the gene cluster that mediates the biosynthesis of aspterpenacids. Performs the C22-oxidative modification of the terpene synthase sttA product preaspterpenacid I to produce preaspterpenacid II. It has still to be determined how preaspterpenacid II is further modified to produce aspterpenacids. The sequence is that of Cytochrome P450 monooxygenase sttB from Aspergillus terreus (strain NIH 2624 / FGSC A1156).